A 476-amino-acid chain; its full sequence is Bifunctional protein HldE (476 aa).

The segment at Met1–Ser319 is ribokinase. Asn195–Glu198 contacts ATP. Asp264 is an active-site residue. Residues Met345–Gln476 are cytidylyltransferase.

In the N-terminal section; belongs to the carbohydrate kinase PfkB family. The protein in the C-terminal section; belongs to the cytidylyltransferase family. As to quaternary structure, homodimer.

It catalyses the reaction D-glycero-beta-D-manno-heptose 7-phosphate + ATP = D-glycero-beta-D-manno-heptose 1,7-bisphosphate + ADP + H(+). The catalysed reaction is D-glycero-beta-D-manno-heptose 1-phosphate + ATP + H(+) = ADP-D-glycero-beta-D-manno-heptose + diphosphate. The protein operates within nucleotide-sugar biosynthesis; ADP-L-glycero-beta-D-manno-heptose biosynthesis; ADP-L-glycero-beta-D-manno-heptose from D-glycero-beta-D-manno-heptose 7-phosphate: step 1/4. Its pathway is nucleotide-sugar biosynthesis; ADP-L-glycero-beta-D-manno-heptose biosynthesis; ADP-L-glycero-beta-D-manno-heptose from D-glycero-beta-D-manno-heptose 7-phosphate: step 3/4. Functionally, catalyzes the phosphorylation of D-glycero-D-manno-heptose 7-phosphate at the C-1 position to selectively form D-glycero-beta-D-manno-heptose-1,7-bisphosphate. In terms of biological role, catalyzes the ADP transfer from ATP to D-glycero-beta-D-manno-heptose 1-phosphate, yielding ADP-D-glycero-beta-D-manno-heptose. The protein is Bifunctional protein HldE of Shewanella sediminis (strain HAW-EB3).